Reading from the N-terminus, the 504-residue chain is Crh-like protein CRH12 (504 aa).

A signal peptide spans 1 to 18 (MYKQILTFLILFLRYILS). The 252-residue stretch at 19–270 (EFPDDPYEDD…YSKALTYSYG (252 aa)) folds into the GH16 domain. An N-linked (GlcNAc...) asparagine glycan is attached at Asn-34. An intrachain disulfide couples Cys-43 to Cys-51. Glu-138 serves as the catalytic Nucleophile. Glu-143 (proton donor) is an active-site residue. Glu-143 lines the chitin pocket. Asn-161 carries N-linked (GlcNAc...) asparagine glycosylation. Residues Lys-221, Trp-225, and Thr-234 each contribute to the chitin site. Positions 304 to 404 (KPTPKQETDD…LDISTQLPPL (101 aa)) are disordered. The span at 316–329 (VLTSSKSQRVATTI) shows a compositional bias: polar residues. Positions 356 to 378 (WETEQDETGTDDTENSDNEEEES) are enriched in acidic residues. N-linked (GlcNAc...) asparagine glycosylation is found at Asn-407, Asn-416, and Asn-425. A lipid anchor (GPI-anchor amidated glycine) is attached at Gly-479. Residues 480-504 (VSSILATSFSSVVIAEILVIVVLLL) constitute a propeptide, removed in mature form.

The protein belongs to the glycosyl hydrolase 16 family. CRH1 subfamily. The GPI-anchor is attached to the protein in the endoplasmic reticulum and serves to target the protein to the cell surface. There, the glucosamine-inositol phospholipid moiety is cleaved off and the GPI-modified mannoprotein is covalently attached via its lipidless GPI glycan remnant to the 1,6-beta-glucan of the outer cell wall layer.

The protein resides in the secreted. It is found in the cell wall. It localises to the membrane. It catalyses the reaction Random endo-hydrolysis of N-acetyl-beta-D-glucosaminide (1-&gt;4)-beta-linkages in chitin and chitodextrins.. Its function is as follows. Dual chitinase/transglycosylase that plays a role in cell wall architecture. Chitinase and transglycosylase activities are coupled. Required for the polysaccharide cross-linking at the septa and the cell wall. More specifically, transfers chitin to 1,6-beta-glucan in the cell wall. Plays an important role in fungal pathogenesis via its functions in cell wall assembly and regeneration, filamentation, and adherence to host cells. This chain is Crh-like protein CRH12 (CRH12), found in Candida albicans (strain SC5314 / ATCC MYA-2876) (Yeast).